Reading from the N-terminus, the 680-residue chain is tRNA 5-methylaminomethyl-2-thiouridine biosynthesis bifunctional protein MnmC (680 aa).

Positions 1–245 are tRNA (mnm(5)s(2)U34)-methyltransferase; the sequence is MSHPPIQTAT…KREMLTGILP (245 aa). An FAD-dependent cmnm(5)s(2)U34 oxidoreductase region spans residues 270 to 680; the sequence is IGGGIVSALT…PVQQRVSVLS (411 aa).

In the N-terminal section; belongs to the methyltransferase superfamily. tRNA (mnm(5)s(2)U34)-methyltransferase family. This sequence in the C-terminal section; belongs to the DAO family. The cofactor is FAD.

The protein localises to the cytoplasm. The enzyme catalyses 5-aminomethyl-2-thiouridine(34) in tRNA + S-adenosyl-L-methionine = 5-methylaminomethyl-2-thiouridine(34) in tRNA + S-adenosyl-L-homocysteine + H(+). Its function is as follows. Catalyzes the last two steps in the biosynthesis of 5-methylaminomethyl-2-thiouridine (mnm(5)s(2)U) at the wobble position (U34) in tRNA. Catalyzes the FAD-dependent demodification of cmnm(5)s(2)U34 to nm(5)s(2)U34, followed by the transfer of a methyl group from S-adenosyl-L-methionine to nm(5)s(2)U34, to form mnm(5)s(2)U34. The protein is tRNA 5-methylaminomethyl-2-thiouridine biosynthesis bifunctional protein MnmC of Yersinia enterocolitica serotype O:8 / biotype 1B (strain NCTC 13174 / 8081).